Reading from the N-terminus, the 222-residue chain is Glutathione-specific gamma-glutamylcyclotransferase 1 (222 aa).

Residues 1-22 (MKQESAAPNTPPTSQSPTPSAQ) are compositionally biased toward low complexity. The segment at 1-24 (MKQESAAPNTPPTSQSPTPSAQFP) is disordered. 35–40 (IFGYGS) lines the substrate pocket. Glu-115 (proton acceptor) is an active-site residue.

Belongs to the gamma-glutamylcyclotransferase family. ChaC subfamily. As to quaternary structure, interacts with NOTCH1 (via extracellular region).

It is found in the cytoplasm. Its subcellular location is the cytosol. The protein resides in the golgi apparatus. The protein localises to the trans-Golgi network. It catalyses the reaction glutathione = L-cysteinylglycine + 5-oxo-L-proline. Functionally, catalyzes the cleavage of glutathione into 5-oxo-L-proline and a Cys-Gly dipeptide. Acts specifically on glutathione, but not on other gamma-glutamyl peptides. Glutathione depletion is an important factor for apoptosis initiation and execution. Acts as a pro-apoptotic component of the unfolded protein response pathway by mediating the pro-apoptotic effects of the ATF4-ATF3-DDIT3/CHOP cascade. Negative regulator of Notch signaling pathway involved in embryonic neurogenesis: acts by inhibiting Notch cleavage by furin, maintaining Notch in an immature inactive form, thereby promoting neurogenesis in embryos. The polypeptide is Glutathione-specific gamma-glutamylcyclotransferase 1 (Homo sapiens (Human)).